Consider the following 76-residue polypeptide: U-scoloptoxin(13)-Sa1a (76 aa).

An N-terminal signal peptide occupies residues 1 to 22; it reads MAYIFALIFAFVVCINTDVIQA.

This sequence belongs to the scoloptoxin-13 family. Contains 4 disulfide bonds. Expressed by the venom gland.

It is found in the secreted. This chain is U-scoloptoxin(13)-Sa1a, found in Scolopendra alternans (Florida Keys giant centipede).